The primary structure comprises 221 residues: Probable endo-1,4-beta-xylanase B (221 aa).

The N-terminal stretch at 1-19 (MVSFSSLALALSTVVGVLA) is a signal peptide. The region spanning 33–221 (QLTHSQTGTK…SSGSATMTVS (189 aa)) is the GH11 domain. The active-site Nucleophile is Glu-117. Glu-208 serves as the catalytic Proton donor.

It belongs to the glycosyl hydrolase 11 (cellulase G) family.

The protein resides in the secreted. It carries out the reaction Endohydrolysis of (1-&gt;4)-beta-D-xylosidic linkages in xylans.. It participates in glycan degradation; xylan degradation. Endo-1,4-beta-xylanase involved in the hydrolysis of xylan, a major structural heterogeneous polysaccharide found in plant biomass representing the second most abundant polysaccharide in the biosphere, after cellulose. This is Probable endo-1,4-beta-xylanase B (xlnB) from Aspergillus clavatus (strain ATCC 1007 / CBS 513.65 / DSM 816 / NCTC 3887 / NRRL 1 / QM 1276 / 107).